A 219-amino-acid polypeptide reads, in one-letter code: UPF0319 protein MS0844 (219 aa).

A signal peptide spans 1-21 (MKFRLTALAVAALLTSTASFA).

Belongs to the UPF0319 family.

The polypeptide is UPF0319 protein MS0844 (Mannheimia succiniciproducens (strain KCTC 0769BP / MBEL55E)).